The primary structure comprises 153 residues: UPF0311 protein RPA1785 (153 aa).

It belongs to the UPF0311 family.

The protein is UPF0311 protein RPA1785 of Rhodopseudomonas palustris (strain ATCC BAA-98 / CGA009).